Here is a 278-residue protein sequence, read N- to C-terminus: Large ribosomal subunit protein uL2 (278 aa).

A disordered region spans residues Asn226–Lys278.

This sequence belongs to the universal ribosomal protein uL2 family. Part of the 50S ribosomal subunit. Forms a bridge to the 30S subunit in the 70S ribosome.

In terms of biological role, one of the primary rRNA binding proteins. Required for association of the 30S and 50S subunits to form the 70S ribosome, for tRNA binding and peptide bond formation. It has been suggested to have peptidyltransferase activity; this is somewhat controversial. Makes several contacts with the 16S rRNA in the 70S ribosome. The chain is Large ribosomal subunit protein uL2 from Rhodopseudomonas palustris (strain HaA2).